The primary structure comprises 772 residues: Semaphorin-3A (772 aa).

The first 20 residues, 1–20 (MGWFTGIACLFWGVLLTARA), serve as a signal peptide directing secretion. Residues 31 to 514 (RLKLSYKEML…STAGVAQLPL (484 aa)) enclose the Sema domain. Residue Asn-53 is glycosylated (N-linked (GlcNAc...) asparagine). Cysteines 103 and 114 form a disulfide. Residue Asn-125 is glycosylated (N-linked (GlcNAc...) asparagine). Intrachain disulfides connect Cys-132–Cys-141, Cys-269–Cys-381, Cys-293–Cys-341, and Cys-517–Cys-535. Residues 579–665 (PSLEERIIYG…GFMQTLLKVT (87 aa)) enclose the Ig-like C2-type domain. Residue Asn-591 is glycosylated (N-linked (GlcNAc...) asparagine). A disulfide bond links Cys-650 and Cys-723. The span at 729–738 (RDRKQRRQRP) shows a compositional bias: basic residues. The disordered stretch occupies residues 729–772 (RDRKQRRQRPGHSQGSSNKWKHMQESKKGRNRRTHEFERAPRSV). The segment covering 750-772 (HMQESKKGRNRRTHEFERAPRSV) has biased composition (basic and acidic residues).

It belongs to the semaphorin family. As to quaternary structure, interacts with PXND1.

The protein localises to the secreted. Its function is as follows. Plays a role in growth cones guidance. May function to pattern sensory projections by selectively repelling axons that normally terminate dorsally. Involved in the development of the olfactory system and in neuronal control of puberty. The protein is Semaphorin-3A (Sema3a) of Mus musculus (Mouse).